The sequence spans 586 residues: Ezrin (586 aa).

The FERM domain maps to 2-295 (PKPINVRVTT…GNHELYMRRR (294 aa)). Lys60 is modified (N6-acetyllysine). The short motif at 115-120 (IYCPPE) is the [IL]-x-C-x-x-[DE] motif element. A Phosphotyrosine; by PDGFR modification is found at Tyr146. The tract at residues 244–586 (EIRNISFNDK…KQRIDEFEAM (343 aa)) is interaction with SCYL3. Positions 302-462 (VQQMKAQARE…QDDLVKTKEE (161 aa)) form a coiled coil. Residues 306–338 (KAQAREEKHQKQLERQQLETEKKRRETVEREKE) are disordered. Positions 308–338 (QAREEKHQKQLERQQLETEKKRRETVEREKE) are enriched in basic and acidic residues. Tyr354 is subject to Phosphotyrosine; by PDGFR. Ser366 is modified (phosphoserine). Residue Tyr478 is modified to Phosphotyrosine. Residues 534–565 (LSNELSQARDENKRTHNDIIHNENMRQGRDKY) form a disordered region. Ser535 is subject to Phosphoserine. Over residues 540-565 (QARDENKRTHNDIIHNENMRQGRDKY) the composition is skewed to basic and acidic residues. A Phosphothreonine; by ROCK2 and PKC/PRKCI modification is found at Thr567.

In terms of assembly, interacts with PALS1 and NHERF2. Found in a complex with EZR, PODXL and NHERF2. Interacts with MCC, PLEKHG6, PODXL, SCYL3/PACE1, NHERF1 and TMEM8B. Interacts (when phosphorylated) with FES/FPS. Interacts with dimeric S100P, the interaction may be activating through unmasking of F-actin binding sites. Identified in complexes that contain VIM, EZR, AHNAK, BFSP1, BFSP2, ANK2, PLEC, PRX and spectrin. Detected in a complex composed of at least EZR, AHNAK, PPL and PRX. Interacts with PDPN (via cytoplasmic domain); activates RHOA and promotes epithelial-mesenchymal transition. Interacts with SPN/CD43 cytoplasmic tail. Interacts with CD44 and ICAM2. Interacts with SLC9A3; interaction targets SLC9A3 to the apical membrane. Interacts with SLC9A1; regulates interactions of SLC9A1 with cytoskeletal and promotes stress fiber formation. Interacts with CLIC5; may work together in a complex which also includes RDX and MYO6 to stabilize linkages between the plasma membrane and subjacent actin cytoskeleton at the base of stereocilia. Post-translationally, phosphorylated by tyrosine-protein kinases. Phosphorylation by ROCK2 suppresses the head-to-tail association of the N-terminal and C-terminal halves resulting in an opened conformation which is capable of actin and membrane-binding. S-nitrosylation is induced by interferon-gamma and oxidatively-modified low-densitity lipoprotein (LDL(ox)) possibly implicating the iNOS-S100A8/9 transnitrosylase complex. Detected in eye lens fiber cells. Expressed in cerebrum and cerebellum (at protein level). Component of the microvilli of intestinal epithelial cells.

It localises to the apical cell membrane. The protein resides in the cell projection. The protein localises to the microvillus membrane. Its subcellular location is the ruffle membrane. It is found in the cytoplasm. It localises to the cell cortex. The protein resides in the cytoskeleton. The protein localises to the microvillus. Its activity is regulated as follows. A head-to-tail association, of the N-terminal and C-terminal halves results in a closed conformation (inactive form) which is incapable of actin or membrane-binding. Functionally, probably involved in connections of major cytoskeletal structures to the plasma membrane. In epithelial cells, required for the formation of microvilli and membrane ruffles on the apical pole. Along with PLEKHG6, required for normal macropinocytosis. In Mus musculus (Mouse), this protein is Ezrin (Ezr).